The sequence spans 330 residues: MAPASQSTYQKDERVLCFHHEILYEAKILDVRHTNAEDKKSPFEYLVHYKGWKNTWDDWVPQDRLRKFTDENRELATTLRREAEAAFRQKSTKTTLKRKAGSDRGSARDSEERQTSVPGRVTKRARDNEIEKEEHFYTRPSVRIVMPDNLKSLLVDDWENVTKNQQVVALPAKASVNQILEDFVAEEKPKRTSSADLDVLEEVIMGIKEYFDKALDKILLYRFEREQYKALRKKWEAGSGEYSEKGPLDVYGAEHLTRLFATMPELIAQTNMDLQSTNRLREELSKFTLWLSKNSDKYFATRYMTATNEYVEKSRGNPSAAATAATTRLV.

A Tudor-knot domain is found at 13–66; it reads ERVLCFHHEILYEAKILDVRHTNAEDKKSPFEYLVHYKGWKNTWDDWVPQDRLR. The interval 86–125 is disordered; sequence AFRQKSTKTTLKRKAGSDRGSARDSEERQTSVPGRVTKRA. Basic and acidic residues predominate over residues 100–114; the sequence is AGSDRGSARDSEERQ. The 178-residue stretch at 138–315 folds into the MRG domain; the sequence is TRPSVRIVMP…ATNEYVEKSR (178 aa).

The protein belongs to the MRG family. As to quaternary structure, component of the NuA4 histone acetyltransferase complex.

It is found in the nucleus. In terms of biological role, involved in deacetylation of histones, chromatin assembly and chromosome segregation. May act as a transcriptional oscillator, directing histone deacetylases to specific chromosomal domains. Component of the NuA4 histone acetyltransferase complex which is involved in transcriptional activation of selected genes principally by acetylation of nucleosomal histone H4 and H2A. The NuA4 complex is also involved in DNA repair. The chain is Chromatin modification-related protein eaf3 (eaf3) from Aspergillus fumigatus (strain ATCC MYA-4609 / CBS 101355 / FGSC A1100 / Af293) (Neosartorya fumigata).